The sequence spans 558 residues: Alkaline/neutral invertase CINV2 (558 aa).

Phosphoserine occurs at positions 16, 19, and 50. Phosphothreonine is present on Thr79. Ser555 is modified (phosphoserine).

This sequence belongs to the glycosyl hydrolase 100 family.

The protein resides in the cytoplasm. It localises to the cytosol. The catalysed reaction is Hydrolysis of terminal non-reducing beta-D-fructofuranoside residues in beta-D-fructofuranosides.. Its function is as follows. Cytosolic invertase that may cleave sucrose into glucose and fructose, and that is involved in the regulation of root growth. May regulate sugar-mediated root development by controlling sucrose catabolism in root cells. This is Alkaline/neutral invertase CINV2 from Arabidopsis thaliana (Mouse-ear cress).